The sequence spans 395 residues: Putative 8-amino-7-oxononanoate synthase (395 aa).

Arg-23 is a substrate binding site. 110–111 (GY) contacts pyridoxal 5'-phosphate. Residue His-135 coordinates substrate. Pyridoxal 5'-phosphate-binding positions include Ser-182, 207-210 (DEAH), and 239-242 (TFSK). At Lys-242 the chain carries N6-(pyridoxal phosphate)lysine. Thr-356 provides a ligand contact to substrate.

It belongs to the class-II pyridoxal-phosphate-dependent aminotransferase family. BioF subfamily. As to quaternary structure, homodimer. Pyridoxal 5'-phosphate serves as cofactor.

It catalyses the reaction 6-carboxyhexanoyl-[ACP] + L-alanine + H(+) = (8S)-8-amino-7-oxononanoate + holo-[ACP] + CO2. It participates in cofactor biosynthesis; biotin biosynthesis. Catalyzes the decarboxylative condensation of pimeloyl-[acyl-carrier protein] and L-alanine to produce 8-amino-7-oxononanoate (AON), [acyl-carrier protein], and carbon dioxide. This Bacillus cereus (strain ATCC 10987 / NRS 248) protein is Putative 8-amino-7-oxononanoate synthase (bioF).